Here is a 365-residue protein sequence, read N- to C-terminus: tRNA/tmRNA (uracil-C(5))-methyltransferase (365 aa).

5 residues coordinate S-adenosyl-L-methionine: glutamine 196, tyrosine 224, asparagine 229, glutamate 245, and aspartate 298. Cysteine 323 functions as the Nucleophile in the catalytic mechanism. Glutamate 357 acts as the Proton acceptor in catalysis.

The protein belongs to the class I-like SAM-binding methyltransferase superfamily. RNA M5U methyltransferase family. TrmA subfamily.

The catalysed reaction is uridine(54) in tRNA + S-adenosyl-L-methionine = 5-methyluridine(54) in tRNA + S-adenosyl-L-homocysteine + H(+). It catalyses the reaction uridine(341) in tmRNA + S-adenosyl-L-methionine = 5-methyluridine(341) in tmRNA + S-adenosyl-L-homocysteine + H(+). Dual-specificity methyltransferase that catalyzes the formation of 5-methyluridine at position 54 (m5U54) in all tRNAs, and that of position 341 (m5U341) in tmRNA (transfer-mRNA). The sequence is that of tRNA/tmRNA (uracil-C(5))-methyltransferase from Nautilia profundicola (strain ATCC BAA-1463 / DSM 18972 / AmH).